The primary structure comprises 358 residues: Cinnamyl alcohol dehydrogenase 1 (358 aa).

Residues 21–349 (GILTPYTYTL…KNDVRYRFVV (329 aa)) enclose the Enoyl reductase (ER) domain. C48 contacts Zn(2+). S50 serves as a coordination point for NADP(+). H70, E71, C101, C104, C107, C115, and C164 together coordinate Zn(2+). Residues T168, 189–194 (GLGGVG), 212–217 (SSSDKK), T252, G276, and 299–301 (SFV) each bind NADP(+).

It belongs to the zinc-containing alcohol dehydrogenase family. As to quaternary structure, homodimer. Zn(2+) serves as cofactor.

It carries out the reaction (E)-cinnamyl alcohol + NADP(+) = (E)-cinnamaldehyde + NADPH + H(+). It catalyses the reaction (E)-coniferol + NADP(+) = (E)-coniferaldehyde + NADPH + H(+). The catalysed reaction is (E)-sinapyl alcohol + NADP(+) = (E)-sinapaldehyde + NADPH + H(+). The enzyme catalyses (E)-4-coumaroyl alcohol + NADP(+) = (E)-4-coumaraldehyde + NADPH + H(+). It functions in the pathway aromatic compound metabolism; phenylpropanoid biosynthesis. Involved in lignin biosynthesis. Catalyzes the final step specific for the production of lignin monomers. Catalyzes the NADPH-dependent reduction of coniferaldehyde, 5-hydroxyconiferaldehyde, sinapaldehyde, 4-coumaraldehyde and caffeyl aldehyde to their respective alcohols. Can use coumaraldehyde and, with a lower efficiency, coniferaldehyde and sinapaldehyde as substrates. The protein is Cinnamyl alcohol dehydrogenase 1 of Medicago truncatula (Barrel medic).